The chain runs to 490 residues: Dual specificity protein kinase CLK3 (490 aa).

Phosphotyrosine is present on Tyr7. A phosphoserine mark is found at Ser9, Ser49, Ser51, Ser67, Ser76, and Ser78. The disordered stretch occupies residues Arg22–Asp138. Basic and acidic residues-rich tracts occupy residues Tyr26–Pro56 and Glu63–Ser76. A compositionally biased stretch (basic residues) spans Thr103 to Arg116. Low complexity predominate over residues Ser117–Lys130. Phosphoserine is present on Ser135. In terms of domain architecture, Protein kinase spans Tyr156–Phe472. Residues Leu162–Val170 and Lys186 contribute to the ATP site. Residue Asp283 is the Proton acceptor of the active site.

This sequence belongs to the protein kinase superfamily. CMGC Ser/Thr protein kinase family. Lammer subfamily. Autophosphorylates on all three types of residues.

It localises to the nucleus. The protein resides in the cytoplasm. The protein localises to the cytoplasmic vesicle. It is found in the secretory vesicle. Its subcellular location is the acrosome. The catalysed reaction is L-seryl-[protein] + ATP = O-phospho-L-seryl-[protein] + ADP + H(+). It carries out the reaction L-threonyl-[protein] + ATP = O-phospho-L-threonyl-[protein] + ADP + H(+). The enzyme catalyses L-tyrosyl-[protein] + ATP = O-phospho-L-tyrosyl-[protein] + ADP + H(+). Its activity is regulated as follows. Leucettine L41 inhibits its kinase activity and affects the regulation of alternative splicing mediated by phosphorylation of SR proteins. Functionally, dual specificity kinase acting on both serine/threonine and tyrosine-containing substrates. Phosphorylates serine- and arginine-rich (SR) proteins of the spliceosomal complex. May be a constituent of a network of regulatory mechanisms that enable SR proteins to control RNA splicing and can cause redistribution of SR proteins from speckles to a diffuse nucleoplasmic distribution. Phosphorylates SRSF1 and SRSF3. Regulates the alternative splicing of tissue factor (F3) pre-mRNA in endothelial cells. The sequence is that of Dual specificity protein kinase CLK3 (CLK3) from Bos taurus (Bovine).